A 173-amino-acid polypeptide reads, in one-letter code: UPF0398 protein SMU_470 (173 aa).

It belongs to the UPF0398 family.

The polypeptide is UPF0398 protein SMU_470 (Streptococcus mutans serotype c (strain ATCC 700610 / UA159)).